The following is a 657-amino-acid chain: Broad substrate specificity ATP-binding cassette transporter ABCG2 (657 aa).

The segment at 1–25 (MSSSNDHVLVPMSQRNKNGLPGMSS) is disordered. At 1–395 (MSSSNDHVLV…KNLLGNPQAS (395 aa)) the chain is on the cytoplasmic side. Residues 48–285 (VKSGFLVRKT…FASAGYHCEP (238 aa)) enclose the ABC transporter domain. ATP contacts are provided by residues 79–86 (GPTGGGKS), 183–189 (RGISGGE), Glu210, and His242. Residues 389–653 (LGNPQASVAQ…TIAYLKLLFL (265 aa)) enclose the ABC transmembrane type-2 domain. Residues 396-416 (VAQLIVTVILGLIIGALYFGL) form a helical membrane-spanning segment. Residues 417 to 428 (KNDPTGMQNRAG) are Extracellular-facing. Residues 429-449 (VFFFLTTNQCFTSVSAVELFV) form a helical membrane-spanning segment. The Cytoplasmic portion of the chain corresponds to 450 to 477 (VEKKLFIHEYISGYYRVSSYFFGKLVSD). The helical transmembrane segment at 478–498 (LLPMRFLPSVIYTCILYFMLG) threads the bilayer. The Extracellular segment spans residues 499-506 (LKRTVEAF). A helical membrane pass occupies residues 507 to 527 (FIMMFTLIMVAYTASSMALAI). The Cytoplasmic portion of the chain corresponds to 528–535 (AAGQSVVS). A helical membrane pass occupies residues 536–556 (VATLLMTISFVFMMLFSGLLV). Over 557 to 632 (NLRTIGPWLS…LSPWGLWRNH (76 aa)) the chain is Extracellular. The cysteines at positions 592 and 610 are disulfide-linked. N-linked (GlcNAc...) asparagine glycosylation is found at Asn596 and Asn600. Residues 633-653 (VALACMIIIFLTIAYLKLLFL) form a helical membrane-spanning segment. Over 654 to 657 (KKYS) the chain is Cytoplasmic.

The protein belongs to the ABC transporter superfamily. ABCG family. Eye pigment precursor importer (TC 3.A.1.204) subfamily. Homodimer; disulfide-linked. The minimal functional unit is a homodimer, but the major oligomeric form in plasma membrane is a homotetramer with possibility of higher order oligomerization up to homododecamers. N-glycosylated in brain capillary, kidney and small intestine but not in heart. In terms of processing, N-glycosylated. Glycosylation-deficient ABCG2 is normally expressed and functional. Post-translationally, phosphorylated. Phosphorylation may regulate the localization to the plasma membrane, the homooligomerization and therefore, the activity of the transporter. As to expression, highly expressed in brain capillary, kidney and small intestine. Lower expression in heart. Preferentially expressed (at protein level) on the luminal membrane of brain capillaries, in kidney and small intestine.

The protein resides in the cell membrane. The protein localises to the apical cell membrane. Its subcellular location is the mitochondrion membrane. The catalysed reaction is ATP + H2O + xenobioticSide 1 = ADP + phosphate + xenobioticSide 2.. The enzyme catalyses urate(in) + ATP + H2O = urate(out) + ADP + phosphate + H(+). It carries out the reaction indoxyl sulfate(in) + ATP + H2O = indoxyl sulfate(out) + ADP + phosphate + H(+). It catalyses the reaction sphing-4-enine 1-phosphate(in) + ATP + H2O = sphing-4-enine 1-phosphate(out) + ADP + phosphate + H(+). The catalysed reaction is estrone 3-sulfate(in) + ATP + H2O = estrone 3-sulfate(out) + ADP + phosphate + H(+). The enzyme catalyses dehydroepiandrosterone 3-sulfate(in) + ATP + H2O = dehydroepiandrosterone 3-sulfate(out) + ADP + phosphate + H(+). It carries out the reaction 4-methylumbelliferone sulfate(in) + ATP + H2O = 4-methylumbelliferone sulfate(out) + ADP + phosphate + H(+). It catalyses the reaction 5,7-dimethyl-2-methylamino-4-(3-pyridylmethyl)-1,3-benzothiazol-6-yl beta-D-glucuronate(in) + ATP + H2O = 5,7-dimethyl-2-methylamino-4-(3-pyridylmethyl)-1,3-benzothiazol-6-yl beta-D-glucuronate(out) + ADP + phosphate + H(+). The catalysed reaction is 4-methylumbelliferone beta-D-glucuronate(in) + ATP + H2O = 4-methylumbelliferone beta-D-glucuronate(out) + ADP + phosphate + H(+). The enzyme catalyses 5,7-dimethyl-2-methylamino-4-(3-pyridylmethyl)-1,3-benzothiazol-6-yl sulfate(in) + ATP + H2O = 5,7-dimethyl-2-methylamino-4-(3-pyridylmethyl)-1,3-benzothiazol-6-yl sulfate(out) + ADP + phosphate + H(+). It carries out the reaction 17beta-estradiol 17-O-(beta-D-glucuronate)(in) + ATP + H2O = 17beta-estradiol 17-O-(beta-D-glucuronate)(out) + ADP + phosphate + H(+). It catalyses the reaction methotrexate(in) + ATP + H2O = methotrexate(out) + ADP + phosphate + H(+). The catalysed reaction is riboflavin(in) + ATP + H2O = riboflavin(out) + ADP + phosphate + H(+). The enzyme catalyses pheophorbide a(in) + ATP + H2O = pheophorbide a(out) + ADP + phosphate + H(+). It carries out the reaction itaconate(in) + ATP + H2O = itaconate(out) + ADP + phosphate + H(+). Broad substrate specificity ATP-dependent transporter of the ATP-binding cassette (ABC) family that actively extrudes a wide variety of physiological compounds, dietary toxins and xenobiotics from cells. Involved in porphyrin homeostasis, mediating the export of protoporphyrin IX (PPIX) from both mitochondria to cytosol and cytosol to extracellular space, it also functions in the cellular export of heme. Also mediates the efflux of sphingosine-1-P from cells. Acts as a urate exporter functioning in both renal and extrarenal urate excretion. In kidney, it also functions as a physiological exporter of the uremic toxin indoxyl sulfate. Also involved in the excretion of steroids like estrone 3-sulfate/E1S, 3beta-sulfooxy-androst-5-en-17-one/DHEAS, and other sulfate conjugates. Mediates the secretion of the riboflavin and biotin vitamins into milk. Extrudes pheophorbide a, a phototoxic porphyrin catabolite of chlorophyll, reducing its bioavailability. Plays an important role in the exclusion of xenobiotics from the brain. It confers to cells a resistance to multiple drugs and other xenobiotics including mitoxantrone, pheophorbide, camptothecin, methotrexate, azidothymidine, and the anthracyclines daunorubicin and doxorubicin, through the control of their efflux. In placenta, it limits the penetration of drugs from the maternal plasma into the fetus. May play a role in early stem cell self-renewal by blocking differentiation. In inflammatory macrophages, exports itaconate from the cytosol to the extracellular compartment and limits the activation of TFEB-dependent lysosome biogenesis involved in antibacterial innate immune response. This chain is Broad substrate specificity ATP-binding cassette transporter ABCG2 (Abcg2), found in Rattus norvegicus (Rat).